The primary structure comprises 202 residues: Adenylate kinase (202 aa).

Residue G12–T20 coordinates ATP.

It belongs to the archaeal adenylate kinase family.

The protein resides in the cytoplasm. The catalysed reaction is AMP + ATP = 2 ADP. The sequence is that of Adenylate kinase (adkA) from Aeropyrum pernix (strain ATCC 700893 / DSM 11879 / JCM 9820 / NBRC 100138 / K1).